The following is a 459-amino-acid chain: Elongation factor 1-alpha (459 aa).

G2 is subject to N,N,N-trimethylglycine. K3 carries the N6,N6-dimethyllysine; alternate modification. At K3 the chain carries N6-methyllysine; alternate. In terms of domain architecture, tr-type G spans 5 to 240 (KTHVNVVVIG…DAVDPPTRPS (236 aa)). The segment at 14 to 21 (GHVDSGKS) is G1. Position 14 to 21 (14 to 21 (GHVDSGKS)) interacts with GTP. Position 30 is an N6-methyllysine (K30). A G2 region spans residues 70–74 (VITID). N6,N6,N6-trimethyllysine is present on K79. A G3 region spans residues 91 to 94 (DAPG). GTP contacts are provided by residues 91 to 95 (DAPGH) and 153 to 156 (NKMD). The interval 153 to 156 (NKMD) is G4. Residues 192-194 (SGW) form a G5 region. N6,N6-dimethyllysine; alternate is present on K316. An N6-methyllysine; alternate modification is found at K316. K390 is subject to N6-methyllysine.

It belongs to the TRAFAC class translation factor GTPase superfamily. Classic translation factor GTPase family. EF-Tu/EF-1A subfamily.

The protein localises to the cytoplasm. Functionally, this protein promotes the GTP-dependent binding of aminoacyl-tRNA to the A-site of ribosomes during protein biosynthesis. This Blastobotrys adeninivorans (Yeast) protein is Elongation factor 1-alpha (TEF).